We begin with the raw amino-acid sequence, 285 residues long: Bifunctional protein FolD (285 aa).

Residues 166 to 168 (GAS) and isoleucine 232 each bind NADP(+).

Belongs to the tetrahydrofolate dehydrogenase/cyclohydrolase family. Homodimer.

The enzyme catalyses (6R)-5,10-methylene-5,6,7,8-tetrahydrofolate + NADP(+) = (6R)-5,10-methenyltetrahydrofolate + NADPH. It catalyses the reaction (6R)-5,10-methenyltetrahydrofolate + H2O = (6R)-10-formyltetrahydrofolate + H(+). It participates in one-carbon metabolism; tetrahydrofolate interconversion. Catalyzes the oxidation of 5,10-methylenetetrahydrofolate to 5,10-methenyltetrahydrofolate and then the hydrolysis of 5,10-methenyltetrahydrofolate to 10-formyltetrahydrofolate. The chain is Bifunctional protein FolD from Photobacterium profundum (strain SS9).